The chain runs to 582 residues: Actin-histidine N-methyltransferase (582 aa).

S-adenosyl-L-methionine contacts are provided by residues Arg-75, 104–106 (EGF), Arg-254, 275–279 (DMCNH), and 325–327 (NGF). Positions 94–314 (DGFELVEFPE…SGEQIYIFYG (221 aa)) constitute an SET domain. The segment at 550 to 582 (DKDLLPNGTKSENDSFLAEDNQQETGNAKDFCS) is disordered.

This sequence belongs to the class V-like SAM-binding methyltransferase superfamily. SETD3 actin-histidine methyltransferase family.

It localises to the cytoplasm. The catalysed reaction is L-histidyl-[protein] + S-adenosyl-L-methionine = N(tele)-methyl-L-histidyl-[protein] + S-adenosyl-L-homocysteine + H(+). Protein-histidine N-methyltransferase that specifically mediates 3-methylhistidine (tele-methylhistidine) methylation of actin at 'His-73'. Does not have protein-lysine N-methyltransferase activity and probably only catalyzes histidine methylation of actin. The sequence is that of Actin-histidine N-methyltransferase from Xenopus tropicalis (Western clawed frog).